Reading from the N-terminus, the 574-residue chain is Galactose transporter (574 aa).

Positions 1–57 (MAVEENNMPVVSQQPQAGEDVISSLSKDSHLSAQSQKYSNDELKAGESGSEGSQSVP) are disordered. At 1-70 (MAVEENNMPV…PKKPMSEYVT (70 aa)) the chain is on the cytoplasmic side. The span at 23–38 (SSLSKDSHLSAQSQKY) shows a compositional bias: polar residues. Ser-32, Ser-35, Ser-39, Ser-48, Ser-50, Ser-53, and Ser-55 each carry phosphoserine. A helical membrane pass occupies residues 71–91 (VSLLCLCVAFGGFMFGWDTGT). At 92-121 (ISGFVVQTDFLRRFGMKHKDGTHYLSNVRT) the chain is on the extracellular side. Residues 122 to 142 (GLIVAIFNIGCAFGGIILSKG) traverse the membrane as a helical segment. Residues 143–149 (GDMYGRK) are Cytoplasmic-facing. The chain crosses the membrane as a helical span at residues 150–170 (KGLSIVVSVYIVGIIIQIASI). The Extracellular portion of the chain corresponds to 171-175 (NKWYQ). Residues 176–196 (YFIGRIISGLGVGGIAVLCPM) traverse the membrane as a helical segment. At 197–207 (LISEIAPKHLR) the chain is on the cytoplasmic side. A helical membrane pass occupies residues 208–228 (GTLVSCYQLMITAGIFLGYCT). The Extracellular segment spans residues 229–242 (NYGTKSYSNSVQWR). Residues 243–263 (VPLGLCFAWSLFMIGALTLVP) traverse the membrane as a helical segment. Topologically, residues 264-342 (ESPRYLCEVN…MGVFVQMFQQ (79 aa)) are cytoplasmic. The chain crosses the membrane as a helical span at residues 343–362 (LTGNNYFFYYGTVIFKSVGL). Residues 363–366 (DDSF) are Extracellular-facing. The chain crosses the membrane as a helical span at residues 367-387 (ETSIVIGVVNFASTFFSLWTV). Residues 388 to 394 (ENLGHRK) are Cytoplasmic-facing. Residues 395–415 (CLLLGAATMMACMVIYASVGV) traverse the membrane as a helical segment. Residues 416 to 435 (TRLYPHGKSQPSSKGAGNCM) lie on the Extracellular side of the membrane. Residues 436–456 (IVFTCFYIFCYATTWAPVAWV) traverse the membrane as a helical segment. Residues 457–472 (ITAESFPLRVKSKCMA) are Cytoplasmic-facing. A helical membrane pass occupies residues 473-493 (LASASNWVWGFLIAFFTPFIT). The Extracellular segment spans residues 494–499 (SAINFY). A helical transmembrane segment spans residues 500 to 520 (YGYVFMGCLVAMFFYVFFFVP). Residues 521-574 (ETKGLSLEEIQELWEEGVLPWKSEGWIPSSRRGNNYDLEDLQHDDKPWYKAMLE) are Cytoplasmic-facing.

Belongs to the major facilitator superfamily. Sugar transporter (TC 2.A.1.1) family.

The protein localises to the membrane. Its function is as follows. GAL2 is a facilitated diffusion transporter required for both the high-affinity galactokinase-dependent and low-affinity galactokinase-independent galactose transport processes. In Saccharomyces cerevisiae (strain ATCC 204508 / S288c) (Baker's yeast), this protein is Galactose transporter (GAL2).